A 392-amino-acid polypeptide reads, in one-letter code: Sugar efflux transporter A (392 aa).

At 1-10 the chain is on the cytoplasmic side; sequence MIWIMTMARR. The helical transmembrane segment at 11–31 threads the bilayer; it reads MNGVYAAFMLVAFMMGVAGAL. The Periplasmic segment spans residues 32–48; sequence QAPTLSLFLSREVGAQP. The helical transmembrane segment at 49–69 threads the bilayer; sequence FWIGLFYTVNAIAGIGVSLWL. Over 70 to 81 the chain is Cytoplasmic; the sequence is AKRSDSQGDRRK. A helical transmembrane segment spans residues 82–102; sequence LIIFCCLMAIGNALLFAFNRH. Over 103–106 the chain is Periplasmic; that stretch reads YLTL. Residues 107–127 traverse the membrane as a helical segment; the sequence is ITCGVLLASLANTAMPQLFAL. Residues 128 to 149 are Cytoplasmic-facing; the sequence is AREYADNSAREVVMFSSVMRAQ. A helical membrane pass occupies residues 150–170; that stretch reads LSLAWVIGPPLAFMLALNYGF. Position 171 (Thr-171) is a topological domain, periplasmic. A helical membrane pass occupies residues 172–192; it reads VMFSIAAGIFTLSLVLIAFML. Over 193 to 219 the chain is Cytoplasmic; sequence PSVARVELPSENALSMQGGWQDSNVRM. Residues 220–240 form a helical membrane-spanning segment; that stretch reads LFVASTLMWTCNTMYIIDMPL. The Periplasmic portion of the chain corresponds to 241–251; that stretch reads WISSELGLPDK. A helical membrane pass occupies residues 252–272; that stretch reads LAGFLMGTAAGLEIPAMILAG. Over 273–282 the chain is Cytoplasmic; the sequence is YYVKRYGKRR. The helical transmembrane segment at 283–303 threads the bilayer; that stretch reads MMVIAVAAGVLFYTGLIFFNS. The Periplasmic portion of the chain corresponds to 304–308; the sequence is RMALM. A helical membrane pass occupies residues 309-329; the sequence is TLQLFNAVFIGIVAGIGMLWF. The Cytoplasmic portion of the chain corresponds to 330-342; that stretch reads QDLMPGRAGAATT. A helical transmembrane segment spans residues 343–363; that stretch reads LFTNSISTGVILAGVIQGAIA. The Periplasmic portion of the chain corresponds to 364–365; the sequence is QS. Residues 366 to 386 traverse the membrane as a helical segment; it reads WGHFAVYWVIAVISVVALFLT. Over 387–392 the chain is Cytoplasmic; sequence AKVKDV.

It belongs to the major facilitator superfamily. Set transporter family.

The protein resides in the cell inner membrane. Functionally, involved in the efflux of sugars. The physiological role may be the detoxification of non-metabolizable sugar analogs. Can transport IPTG, lactose and glucose. Has broad substrate specificity, with preferences for glucosides or galactosides with alkyl or aryl substituents. The chain is Sugar efflux transporter A (setA) from Escherichia coli (strain K12).